Here is a 421-residue protein sequence, read N- to C-terminus: Imidazolonepropionase (421 aa).

Positions 81 and 83 each coordinate Fe(3+). Zn(2+) contacts are provided by His81 and His83. Residues Arg90, Tyr153, and His186 each contribute to the 4-imidazolone-5-propanoate site. Tyr153 contacts N-formimidoyl-L-glutamate. Fe(3+) is bound at residue His251. His251 is a binding site for Zn(2+). Glu254 contributes to the 4-imidazolone-5-propanoate binding site. Asp326 provides a ligand contact to Fe(3+). Residue Asp326 coordinates Zn(2+). 2 residues coordinate N-formimidoyl-L-glutamate: Asn328 and Gly330. Ser331 contributes to the 4-imidazolone-5-propanoate binding site.

Belongs to the metallo-dependent hydrolases superfamily. HutI family. It depends on Zn(2+) as a cofactor. Requires Fe(3+) as cofactor.

It is found in the cytoplasm. The enzyme catalyses 4-imidazolone-5-propanoate + H2O = N-formimidoyl-L-glutamate. It functions in the pathway amino-acid degradation; L-histidine degradation into L-glutamate; N-formimidoyl-L-glutamate from L-histidine: step 3/3. In terms of biological role, catalyzes the hydrolytic cleavage of the carbon-nitrogen bond in imidazolone-5-propanoate to yield N-formimidoyl-L-glutamate. It is the third step in the universal histidine degradation pathway. This Streptococcus gordonii (strain Challis / ATCC 35105 / BCRC 15272 / CH1 / DL1 / V288) protein is Imidazolonepropionase.